The sequence spans 259 residues: MAPNIYLVRQRISRLGQRMSGFQINLNPLKEPLGFIKVLEWIASIFAFATCGGFKGQTEIQVNCPPAVTENKTVTATFGYPFRLNEASFQPPPGVNICDVNWKDYVLIGDYSSSAQFYVTFAVFVFLYCIAALLLYVGYTSLYLDSRKLPMIDFVVTLVATFLWLVSTSAWAKALTDIKIATGHNIIDELPPCKKKAVLCYFGSVTSMGSLNVSVIFGFLNMILWGGNAWFVYKETSLHSPSNTSAPHSQGGIPPPTGI.

Residues Met1–Leu33 lie on the Cytoplasmic side of the membrane. Residues Pro28–Ser237 form the MARVEL domain. The helical transmembrane segment at Gly34–Phe54 threads the bilayer. Topologically, residues Lys55–Gln116 are vesicular. The N-linked (GlcNAc...) asparagine glycan is linked to Asn71. The chain crosses the membrane as a helical span at residues Phe117 to Val137. The Cytoplasmic portion of the chain corresponds to Gly138–Pro150. The helical transmembrane segment at Met151–Trp171 threads the bilayer. At Ala172–Asn212 the chain is on the vesicular side. Asn212 carries N-linked (GlcNAc...) asparagine glycosylation. A helical membrane pass occupies residues Val213–Tyr233. Over Lys234 to Ile259 the chain is Cytoplasmic.

This sequence belongs to the synaptophysin/synaptobrevin family.

The protein localises to the cytoplasmic vesicle membrane. It is found in the melanosome. In Homo sapiens (Human), this protein is Synaptophysin-like protein 1 (SYPL1).